The chain runs to 178 residues: Stathmin-2-B (178 aa).

The SLD domain occupies 38 to 178 (DDMEVKQLNK…KNKEQLELSG (141 aa)). Residues 75-178 (KRKDVSLEEI…KNKEQLELSG (104 aa)) adopt a coiled-coil conformation.

Belongs to the stathmin family. In terms of tissue distribution, nervous tissue.

Its subcellular location is the cytoplasm. It is found in the membrane. It localises to the cell projection. The protein localises to the lamellipodium. This Xenopus laevis (African clawed frog) protein is Stathmin-2-B (stmn2-b).